Consider the following 436-residue polypeptide: T-box transcription factor TBX6 (436 aa).

The T-box DNA-binding region spans 100 to 273; that stretch reads LWKEFSSVGT…ANPFAKGFRE (174 aa). Residues 271–284 show a composition bias toward basic and acidic residues; the sequence is FRENGRNCKRERDA. Disordered regions lie at residues 271–339 and 360–379; these read FREN…APAP and PSHL…SGRS. The span at 325–339 shows a compositional bias: low complexity; it reads EQAPAPGEATAAPAP.

Forms a dimeric complex with DNA (in vitro). As to expression, expressed in fetal tail bud, posterior spinal tissue, intervertebral disk and testis. Also expressed in adult testis, kidney, lung, muscle and thymus.

Its subcellular location is the nucleus. In terms of biological role, T-box transcription factor that plays an essential role in the determination of the fate of axial stem cells: neural vs mesodermal. Acts in part by down-regulating, a specific enhancer (N1) of SOX2, to inhibit neural development. Seems to play also an essential role in left/right axis determination and acts through effects on Notch signaling around the node as well as through an effect on the morphology and motility of the nodal cilia. This chain is T-box transcription factor TBX6 (TBX6), found in Homo sapiens (Human).